Consider the following 259-residue polypeptide: Protein LEAD-SENSITIVE 1 (259 aa).

Residues 20–168 (YSWRTAYIYA…CKTALLVLEG (149 aa)) enclose the LRAT domain. Catalysis depends on residues H30 and H42. Catalysis depends on C152, which acts as the Acyl-thioester intermediate.

In terms of tissue distribution, highly expressed in inflorescences, siliques and stems, and, to a lower extent, in roots and leaves.

It is found in the cytoplasm. Its function is as follows. Confers tolerance to lead ions (Pb) stress mediated by Pb(NO(3))(2) probably by promoting Pb accumulation leading to subsequent glutathione-dependent phytochelatin (PC) synthesis and related gene expression, including PDR12/ABCG40, GSH1, GSH2, GR1, GR2, PCS1 and PCS2. The polypeptide is Protein LEAD-SENSITIVE 1 (Arabidopsis thaliana (Mouse-ear cress)).